Consider the following 200-residue polypeptide: dTTP/UTP pyrophosphatase (200 aa).

The active-site Proton acceptor is Asp-73.

The protein belongs to the Maf family. YhdE subfamily. It depends on a divalent metal cation as a cofactor.

The protein resides in the cytoplasm. The enzyme catalyses dTTP + H2O = dTMP + diphosphate + H(+). It carries out the reaction UTP + H2O = UMP + diphosphate + H(+). Its function is as follows. Nucleoside triphosphate pyrophosphatase that hydrolyzes dTTP and UTP. May have a dual role in cell division arrest and in preventing the incorporation of modified nucleotides into cellular nucleic acids. The sequence is that of dTTP/UTP pyrophosphatase from Chromohalobacter salexigens (strain ATCC BAA-138 / DSM 3043 / CIP 106854 / NCIMB 13768 / 1H11).